Reading from the N-terminus, the 243-residue chain is MDPSAALHRRPAGGGLGAVSPALSGGQARRRKQPPRPADFKLQVIIIGSRGVGKTSLMERFTDDTFCEACKSTVGVDFKIKTVELRGKKIRLQIWDTAGQERFNSITSAYYRSAKGIILVYDITKKETFDDLPKWMKMIDKYASEDAELLLVGNKLDCETDREISRQQGEKFAQQITGMRFCEASAKDNFNVDEIFLKLVDDILKKMPLDVLRSELSNSILSLQPEPEIPPELPPPRPHVRCC.

At M1 the chain carries N-acetylmethionine. The tract at residues 1–36 is disordered; it reads MDPSAALHRRPAGGGLGAVSPALSGGQARRRKQPPR. A phosphoserine mark is found at S20 and S24. GTP-binding residues include G51, V52, G53, K54, T55, S72, and T73. T55 contacts Mg(2+). Short sequence motifs (switch) lie at residues 64 to 78 and 96 to 113; these read DTFCEACKSTVGVDF and DTAGQERFNSITSAYYRS. 2 residues coordinate Mg(2+): T73 and D96. G99 is a GTP binding site. Position 105 is a phosphoserine (S105). GTP contacts are provided by N154, K155, D157, S185, A186, and K187. 2 S-geranylgeranyl cysteine lipidation sites follow: C242 and C243.

It belongs to the small GTPase superfamily. Rab family. In terms of assembly, interacts with RABIF and OPTN. Interacts with LRRK2; interaction facilitates phosphorylation of Ser-105. Interacts with GDI1, GDI2 and CHM; these interactions are disrupted by phosphorylation on Ser-105. Interacts with RILPL1 and RILPL2; these interactions are dependent on phosphorylation of Ser-105. The cofactor is Mg(2+). Post-translationally, phosphorylation of Ser-105 in the switch II region by LRRK2 prevents the association of RAB regulatory proteins, including CHM and RAB GDP dissociation inhibitors GDI1 and GDI2. In terms of tissue distribution, highest levels in skeletal and cardiac muscle. Also found in comparable amounts in brain, spinal cord and lung. Also detected in testis where it is expressed by Sertoli cells of the seminiferous tubules (at protein level).

Its subcellular location is the recycling endosome membrane. The protein localises to the lysosome membrane. The protein resides in the golgi apparatus membrane. It localises to the cytoplasmic vesicle. It is found in the autophagosome. It carries out the reaction GTP + H2O = GDP + phosphate + H(+). Its activity is regulated as follows. Regulated by guanine nucleotide exchange factors (GEFs) including DENND3 which promote the exchange of bound GDP for free GTP. Regulated by GTPase activating proteins (GAPs) which increase the GTP hydrolysis activity. Inhibited by GDP dissociation inhibitors (GDIs). In terms of biological role, the small GTPases Rab are key regulators of intracellular membrane trafficking, from the formation of transport vesicles to their fusion with membranes. Rabs cycle between an inactive GDP-bound form and an active GTP-bound form that is able to recruit to membranes different sets of downstream effectors directly responsible for vesicle formation, movement, tethering and fusion. RAB12 may play a role in protein transport from recycling endosomes to lysosomes regulating, for instance, the degradation of the transferrin receptor. Involved in autophagy. In Rattus norvegicus (Rat), this protein is Ras-related protein Rab-12.